The primary structure comprises 425 residues: G protein-activated inward rectifier potassium channel 2 (425 aa).

Residues 1 to 91 (MTMAKLTESM…IFTTLVDLKW (91 aa)) are Cytoplasmic-facing. S18 and S25 each carry phosphoserine. Residues 92-116 (RFNLLIFVMVYTVTWLFFGMIWWLI) form a helical membrane-spanning segment. The Extracellular portion of the chain corresponds to 117–140 (AYIRGDMDHIEDPSWTPCVTNLNG). Positions 141–152 (FVSAFLFSIETE) form an intramembrane region, helical; Pore-forming. Residues 153-159 (TTIGYGY) constitute an intramembrane region (pore-forming). The Selectivity filter motif lies at 154–159 (TIGYGY). At 160 to 168 (RVITDKCPE) the chain is on the extracellular side. A helical transmembrane segment spans residues 169–190 (GIILLLIQSVLGSIVNAFMVGC). At 191 to 425 (MFVKISQPKK…VANLENESKV (235 aa)) the chain is on the cytoplasmic side. The segment at 392–425 (NQHAELETEEEEKNPEELTERNGDVANLENESKV) is disordered. The short motif at 422–425 (ESKV) is the PDZ-binding element.

This sequence belongs to the inward rectifier-type potassium channel (TC 1.A.2.1) family. KCNJ6 subfamily. In terms of assembly, associates with KCNJ3/GIRK1 or KCNJ5/GRIK4 to form a G-protein-activated heteromultimer pore-forming unit. The resulting inward current is much larger. Interacts (via PDZ-binding motif) with SNX27 (via PDZ domain); the interaction is required for recycling to the plasma membrane when endocytosed and prevent degradation in lysosomes. In terms of tissue distribution, pancreatic beta cells and brain.

Its subcellular location is the membrane. The enzyme catalyses K(+)(in) = K(+)(out). With respect to regulation, activated by phosphatidylinositol 4,5 biphosphate (PtdIns(4,5)P2). Its function is as follows. Inward rectifier potassium channels are characterized by a greater tendency to allow potassium to flow into the cell rather than out of it. Their voltage dependence is regulated by the concentration of extracellular potassium; as external potassium is raised, the voltage range of the channel opening shifts to more positive voltages. The inward rectification is mainly due to the blockage of outward current by internal magnesium. This potassium channel may be involved in the regulation of insulin secretion by glucose and/or neurotransmitters acting through G-protein-coupled receptors. This chain is G protein-activated inward rectifier potassium channel 2 (Kcnj6), found in Rattus norvegicus (Rat).